The sequence spans 245 residues: Cysteine-rich secretory protein 3 (245 aa).

An N-terminal signal peptide occupies residues 1–22 (MALLPVLLFLAAVLLPFFPASG). Positions 42-171 (VNKHNDLRRT…TLKYYYVCQY (130 aa)) constitute an SCP domain. 5 cysteine pairs are disulfide-bonded: Cys-191/Cys-198, Cys-194/Cys-203, Cys-207/Cys-240, Cys-216/Cys-234, and Cys-225/Cys-238. Residues 207-240 (CEYEDLVSNCDSLKKIAGCEHELLKENCKTTCQC) form the ShKT domain.

Belongs to the CRISP family. As to quaternary structure, interacts with A1BG. Expressed in the salivary gland, in the ampulla and the seminal vesicle.

It localises to the secreted. This is Cysteine-rich secretory protein 3 (CRISP3) from Equus caballus (Horse).